We begin with the raw amino-acid sequence, 202 residues long: Small ribosomal subunit protein uS4 (202 aa).

Over residues 1 to 13 (MSRYRGPRLRVTR) the composition is skewed to basic residues. The disordered stretch occupies residues 1–42 (MSRYRGPRLRVTRRLGELPGLTRKASKKSNPPGQHGQARRKR). An S4 RNA-binding domain is found at 90-152 (NRLDNVCFRL…KASKKLVEGN (63 aa)).

This sequence belongs to the universal ribosomal protein uS4 family. In terms of assembly, part of the 30S ribosomal subunit. Contacts protein S5. The interaction surface between S4 and S5 is involved in control of translational fidelity.

One of the primary rRNA binding proteins, it binds directly to 16S rRNA where it nucleates assembly of the body of the 30S subunit. In terms of biological role, with S5 and S12 plays an important role in translational accuracy. In Prochlorococcus marinus (strain AS9601), this protein is Small ribosomal subunit protein uS4.